The sequence spans 916 residues: Internalin J (916 aa).

Positions 1 to 25 are cleaved as a signal peptide; sequence MKTSKIIIASLVSLTLVSNPILTFA. LRR repeat units lie at residues 94–115, 116–136, 137–157, 158–179, 180–200, 201–221, 222–243, 244–263, 264–284, 285–306, 316–325, 338–357, 359–368, and 380–402; these read TLTSLDCHNSSIADMTGIEKLT, GLTKLICTYNNITTLDLSQNT, NLTYLACDSNKLTNLDVTPLT, KLTYLNCDTNKLTKIDVSQNPL, LTYLNCARNTLTEIDVSHNTQ, LTELDCHLNKKITKLDVTPQT, QLTTLDCSFNKITALDVSQNKL, LNRLNCDTNNITKLDLNQNI, QLTFLNCSSNKLTEIDVTPLT, QLTYFDCSVNPLTELDVSTLSK, DLLEIDLTHN, KIKELDVTHNTQLYLLDCQA, GITELDLSQN, and ELTKLDVSHNTKLKSLSCVNAHI. MucBP domains lie at 506-568, 576-638, 646-708, 717-779, and 787-849; these read PIKG…SQSV, IVAA…SQTV, IVAA…AQTV, and APEK…SQTV. Positions 862–888 are disordered; the sequence is PLPDKKTTKPSNLKTTEVKKASDTLPK. The LPXTG sorting signal motif lies at 886–890; that stretch reads LPKTG. Thr-889 carries the post-translational modification Pentaglycyl murein peptidoglycan amidated threonine. Residues 890–916 constitute a propeptide, removed by sortase; sequence GDSTPWKSALLGVFLSSTALVIWKKKK.

This sequence belongs to the internalin family.

It is found in the secreted. The protein resides in the cell wall. In terms of biological role, involved in several steps of L.monocytogenes infection, probably improves adhesin to host cells. This Listeria monocytogenes serotype 4b (strain F2365) protein is Internalin J (inlJ).